The following is a 117-amino-acid chain: Synaptobrevin homolog 1 (117 aa).

The disordered stretch occupies residues 1–30; it reads MSSSTPFDPYALSEHDEERPQNVQSKSRTA. Residues 1–94 lie on the Cytoplasmic side of the membrane; that stretch reads MSSSTPFDPY…MWYKDLKMKM (94 aa). In terms of domain architecture, v-SNARE coiled-coil homology spans 28-88; sequence RTAELQAEID…NRVRKAMWYK (61 aa). Lysine 63 is covalently cross-linked (Glycyl lysine isopeptide (Lys-Gly) (interchain with G-Cter in ubiquitin)). Cysteine 95 is lipidated: S-palmitoyl cysteine. A helical; Anchor for type IV membrane protein membrane pass occupies residues 95–111; the sequence is CLALVIIILLVVIIVPI. The Vesicular segment spans residues 112–117; that stretch reads AVHFSR.

It belongs to the synaptobrevin family. In terms of processing, palmitoylated by SWF1.

It is found in the endomembrane system. SNC1 and SNC2 are vesicle-targeting proteins essential for normal secretory traffic between the Golgi and the plasma membrane. They may also be involved in vesicle fusion. The protein is Synaptobrevin homolog 1 (SNC1) of Saccharomyces cerevisiae (strain ATCC 204508 / S288c) (Baker's yeast).